Consider the following 560-residue polypeptide: Formate--tetrahydrofolate ligase (560 aa).

An ATP-binding site is contributed by 69 to 76 (TPAGEGKS).

This sequence belongs to the formate--tetrahydrofolate ligase family.

It carries out the reaction (6S)-5,6,7,8-tetrahydrofolate + formate + ATP = (6R)-10-formyltetrahydrofolate + ADP + phosphate. Its pathway is one-carbon metabolism; tetrahydrofolate interconversion. This is Formate--tetrahydrofolate ligase from Listeria innocua serovar 6a (strain ATCC BAA-680 / CLIP 11262).